Consider the following 322-residue polypeptide: MMRDLDLDALQAQLAGTPLQEWACELPGQLDAKLAIGHGDLARWYGAVQALPALPVSEVELARRFAFGGACDDASRAQLKTALQGLIPWRKGPFELFGVHIDTEWRSDWKWQRVAPHLDLTGKRILDVGCGNGYYMWRMLGAGAGSVVGIDPNWLFLCQFLAMKRYLPEQPVWHLPLAFEELPAKLQGFDTVFSMGVLYHRRSPIDHLLDLKDALVKGGELVLETLVVEGDAEQVLVPEDRYAQMRNVWFLPSVPALERWLRRAGFEDVRCVDVSTTSVDEQRATEWMRFQSLPEFLDPADHSRTVEGLPAPTRAVLIARKP.

The carboxy-S-adenosyl-L-methionine site is built by lysine 91, tryptophan 105, lysine 110, glycine 129, methionine 195, tyrosine 199, and arginine 314.

The protein belongs to the class I-like SAM-binding methyltransferase superfamily. CmoB family. Homotetramer.

The enzyme catalyses carboxy-S-adenosyl-L-methionine + 5-hydroxyuridine(34) in tRNA = 5-carboxymethoxyuridine(34) in tRNA + S-adenosyl-L-homocysteine + H(+). Catalyzes carboxymethyl transfer from carboxy-S-adenosyl-L-methionine (Cx-SAM) to 5-hydroxyuridine (ho5U) to form 5-carboxymethoxyuridine (cmo5U) at position 34 in tRNAs. The chain is tRNA U34 carboxymethyltransferase from Ectopseudomonas mendocina (strain ymp) (Pseudomonas mendocina).